The primary structure comprises 2281 residues: MKRHQFKSWIFELREILREIKNSHSFLDSWTKFDSVGSFTHIFFHQERFMNLFDPRIWSILLSRDSQGSTSNRYFTIKGVVLFVVTVLIYRINNRNMVERKNLYLMGLLPIPIPMNSIGPRNDTLEESFGSSNINRLIVSLLYLPKGKKISESCFLDPKESTWVLPITKKCIMPESNWGSRWWRNWIGKKRDSSCKISNETVAGIEISFKEKDIKYLEFLFVYYTDDPIRKDHDWELFDRLSPRKKRNIINFNSGQLFEILVKHWICYLMSAFREKRPIEVEGFFKQQGAESTIQSNDIEHVSHLFSRNKWGISLQNCAQFHMWQFRQDLFVSWGKNPHESDFLRKVSRENWIWLDNVWLVNKDRFFSKVRNVSSNIQYDSTRSIFVQVRDSSQLKGSSDQSRDHFDSIRNEDSEYHTLINQREIQQLKERSILWDPSFLQTERTEIESDRFPKCLSGYSSMSRLFTEREKQMNNHLLPEEIEEFLGNPTRSIRSFFSDRWSELHLGSNPTERSTRDQKLLKKQQDVSFVPSRRSENKEMVDIFKIITYLQNTVSIHPISSDPGCDMVPKDEPDMDSSNKISFLNKNPFLDLFHLFHDRNRGGYTLHHDFESEERFQEIADLFTLSITEPDLVYHKGFALSIDSYGLDQKKFLNEVFNSRDESKNKSLSLADPPIFYEENESFYRRIRKKSVRISCGNDLEDPKQKIVVFASNNIMEAVNQYRLIRNLIQIQYSTYGYIRNVSNRFFLMNRSDRNFEYGIQRDQIGNDTLNHRTIMKYMINQHLSNLKKSQKKWFDPLISRTERSMNRDPDAYRYKWSNGSKNFQEHFVSEQKSRFQVVFDRLRINQYSIDWSEVIDKKDLSKSLRFFLSKSLLFLSKSLLFLSKSLPFFFVSFGNIPIHRSEIHIYELKGPNDQLCNQLLESIGVQIVHLNKLKPFLLDTSQKSKFLINGGTISPFLFNKIQKWMIDSFHTRNNRRKSFDNTDSYFSMISHDRDNWLNPVKPFHRSSLISSFYKANRLRFLNNPHHFWFYCNKRFPFYVEKARINNYDLTYGQFLNILFIRNKIFSLCVGKKKHAFLERDTISPIESQVSNIFIPNDFPQGGDETYNLYKSFHFPIRSDPFVRRAIYSIADISGTPLTEGQIVNFERTYCQPLSDMNISDSEGKNFHQYLNFNSNMGLIHTPCSEKYLPSEKRKNRSLCLKKCVEKRQMYRTFQRDSAFSNLSKWNLFQTYMPWFLTSTGCKYLNFTLLDTFSDLLPILSSSKKFVSIFNDIMHGSDISWPIPQKKWCLPQWNLISEISSKCLHNLLLSEEMIHRNNESPVPLIWAHLRSPNAREFLYSILFLLLVAGYLVRTHLLFVSRASSELQTEFEKIKSLMIPSYMIELRKLLDRYPTSELNSFWLKNLFLVALEQLGDSLEEIRGSASGGNMLLGGGPAYGVKSIRSKKKYLNINLIDLISIIPNPINRITFSRNTRHLSRTSKEIYSLIRKRKNVNGDWIDDKIESWVANSDSIDDEEREFLVQFSTLTTEKRIDQILLSLTHSDHLSKNDSGYQMIEQPGSIYLRYLVDIHKKYLMNYEFNRSCLAERRIFLAHYQTITYSQTSCGANSFHFPSHGKPFSLRLALSPSRGILVIGSIGTGRSYLVKYLATNSYVPFITLFPNKFLDDKPKGYLIDDIDIDDSDDIDDSDDIYDSDDIDDLDTELLTMTNALTMYMTPKIDRFDITLQFELAKAMSPCIIWIPNIHDLYVNESNYLSLGLLVNYLSRDCERCSTRNILVIASTHTPQKVDPALIAPNKLNTCIKIRRLLIPQQRKHFFTLSYTRGFRLEKKMFHTNGFGSITMGSNARDLVALTNEALSISITQKKSIIDTNTIRSALHRQTWDLRSQVRSVRDHGILFYQIGRAVAQNVLLSNCPIDPISIYMKKKSCKEGDSYLYKWYFELGTSMKKLTILLYLLSCSAGSVAQDLWSLPGPDEKNWITSYGLVENDSDLVHGLLEVEGALVGSSRTEKDCSQFDNDRVTLLLRSEPRNPLDMMQNGSCSIVDQRFLYEKYESEFEEGEGALDPQQIEEDLFNHIVWAPRIWRPCGNLFDCIERPNELGFPYWARSFRGKQIIYHKEDELQENDSEFLQSGTMQYQTRDRSSKEQGFFRISQFIWDPADPFFFLFKDQPFVSVFSRREFFADEEMSKGLLTSQTNPPTSIYKRWFIKNTQEKHFELLIHRQRWLRTNSSLSNGSFRSNTLSESYQYLSNLFLSNGTLLDQMTKTLLRKRWLFPDEMKIGFM.

1634–1641 (GSIGTGRS) contributes to the ATP binding site.

The protein belongs to the Ycf2 family.

The protein resides in the plastid. Its subcellular location is the chloroplast stroma. Its function is as follows. Probable ATPase of unknown function. Its presence in a non-photosynthetic plant (Epifagus virginiana) and experiments in tobacco indicate that it has an essential function which is probably not related to photosynthesis. This Buxus microphylla (Littleleaf boxwood) protein is Protein Ycf2.